We begin with the raw amino-acid sequence, 263 residues long: Small ribosomal subunit protein uS2 (263 aa).

A disordered region spans residues 223–246 (KSLLEQDSDANADEAEVSQEEKDA). Residues 228-240 (QDSDANADEAEVS) are compositionally biased toward acidic residues.

This sequence belongs to the universal ribosomal protein uS2 family.

The sequence is that of Small ribosomal subunit protein uS2 from Campylobacter curvus (strain 525.92).